Reading from the N-terminus, the 370-residue chain is 4-hydroxy-3-methylbut-2-en-1-yl diphosphate synthase (flavodoxin) (370 aa).

The [4Fe-4S] cluster site is built by Cys-268, Cys-271, Cys-303, and Glu-310.

This sequence belongs to the IspG family. [4Fe-4S] cluster is required as a cofactor.

It carries out the reaction (2E)-4-hydroxy-3-methylbut-2-enyl diphosphate + oxidized [flavodoxin] + H2O + 2 H(+) = 2-C-methyl-D-erythritol 2,4-cyclic diphosphate + reduced [flavodoxin]. It participates in isoprenoid biosynthesis; isopentenyl diphosphate biosynthesis via DXP pathway; isopentenyl diphosphate from 1-deoxy-D-xylulose 5-phosphate: step 5/6. Converts 2C-methyl-D-erythritol 2,4-cyclodiphosphate (ME-2,4cPP) into 1-hydroxy-2-methyl-2-(E)-butenyl 4-diphosphate. This is 4-hydroxy-3-methylbut-2-en-1-yl diphosphate synthase (flavodoxin) from Bacillus anthracis (strain A0248).